The chain runs to 156 residues: Small ribosomal subunit protein uS7 (156 aa).

It belongs to the universal ribosomal protein uS7 family. In terms of assembly, part of the 30S ribosomal subunit. Contacts proteins S9 and S11.

In terms of biological role, one of the primary rRNA binding proteins, it binds directly to 16S rRNA where it nucleates assembly of the head domain of the 30S subunit. Is located at the subunit interface close to the decoding center, probably blocks exit of the E-site tRNA. The chain is Small ribosomal subunit protein uS7 from Geotalea uraniireducens (strain Rf4) (Geobacter uraniireducens).